Reading from the N-terminus, the 278-residue chain is 4-deoxy-L-threo-5-hexosulose-uronate ketol-isomerase (278 aa).

H196, H198, E203, and H245 together coordinate Zn(2+).

The protein belongs to the KduI family. It depends on Zn(2+) as a cofactor.

The enzyme catalyses 5-dehydro-4-deoxy-D-glucuronate = 3-deoxy-D-glycero-2,5-hexodiulosonate. The protein operates within glycan metabolism; pectin degradation; 2-dehydro-3-deoxy-D-gluconate from pectin: step 4/5. In terms of biological role, catalyzes the isomerization of 5-dehydro-4-deoxy-D-glucuronate to 3-deoxy-D-glycero-2,5-hexodiulosonate. The protein is 4-deoxy-L-threo-5-hexosulose-uronate ketol-isomerase of Shigella boydii serotype 4 (strain Sb227).